Reading from the N-terminus, the 446-residue chain is tRNA-2-methylthio-N(6)-dimethylallyladenosine synthase (446 aa).

The region spanning 2 to 122 is the MTTase N-terminal domain; it reads KKAYVKSYGC…LPDLLRQSRE (121 aa). [4Fe-4S] cluster contacts are provided by C11, C47, C85, C157, C161, and C164. The region spanning 143–375 is the Radical SAM core domain; sequence RNRGVTGFLT…QDLLDRQRHA (233 aa). A TRAM domain is found at 378–440; sequence AASVGTLTEI…SNSLFGEALE (63 aa).

Belongs to the methylthiotransferase family. MiaB subfamily. As to quaternary structure, monomer. Requires [4Fe-4S] cluster as cofactor.

Its subcellular location is the cytoplasm. The catalysed reaction is N(6)-dimethylallyladenosine(37) in tRNA + (sulfur carrier)-SH + AH2 + 2 S-adenosyl-L-methionine = 2-methylsulfanyl-N(6)-dimethylallyladenosine(37) in tRNA + (sulfur carrier)-H + 5'-deoxyadenosine + L-methionine + A + S-adenosyl-L-homocysteine + 2 H(+). Catalyzes the methylthiolation of N6-(dimethylallyl)adenosine (i(6)A), leading to the formation of 2-methylthio-N6-(dimethylallyl)adenosine (ms(2)i(6)A) at position 37 in tRNAs that read codons beginning with uridine. The sequence is that of tRNA-2-methylthio-N(6)-dimethylallyladenosine synthase from Methylorubrum extorquens (strain CM4 / NCIMB 13688) (Methylobacterium extorquens).